A 160-amino-acid chain; its full sequence is Cyclic pyranopterin monophosphate synthase (160 aa).

Substrate is bound by residues Leu76–His78 and Met114–Glu115. The active site involves Asp129.

Belongs to the MoaC family. In terms of assembly, homohexamer; trimer of dimers.

It carries out the reaction (8S)-3',8-cyclo-7,8-dihydroguanosine 5'-triphosphate = cyclic pyranopterin phosphate + diphosphate. It participates in cofactor biosynthesis; molybdopterin biosynthesis. Catalyzes the conversion of (8S)-3',8-cyclo-7,8-dihydroguanosine 5'-triphosphate to cyclic pyranopterin monophosphate (cPMP). The sequence is that of Cyclic pyranopterin monophosphate synthase from Saccharophagus degradans (strain 2-40 / ATCC 43961 / DSM 17024).